The following is a 359-amino-acid chain: Aromatic amino acid aminotransferase (359 aa).

The span at 1–12 (MSETSPKLRAEL) shows a compositional bias: basic and acidic residues. The segment at 1–21 (MSETSPKLRAELEGIPTYKPG) is disordered. Residue Lys223 is modified to N6-(pyridoxal phosphate)lysine.

It belongs to the class-II pyridoxal-phosphate-dependent aminotransferase family. In terms of assembly, homodimer. It depends on pyridoxal 5'-phosphate as a cofactor.

It catalyses the reaction an aromatic L-alpha-amino acid + 2-oxoglutarate = an aromatic oxo-acid + L-glutamate. Aminotransferase that catalyzes the conversion of aromatic amino acids and 2-oxoglutarate into corresponding aromatic oxo acids and L-glutamate. In Streptomyces coelicolor (strain ATCC BAA-471 / A3(2) / M145), this protein is Aromatic amino acid aminotransferase.